The primary structure comprises 482 residues: ATP synthase subunit beta (482 aa).

Position 162–169 (162–169 (GGAGVGKT)) interacts with ATP.

This sequence belongs to the ATPase alpha/beta chains family. In terms of assembly, F-type ATPases have 2 components, CF(1) - the catalytic core - and CF(0) - the membrane proton channel. CF(1) has five subunits: alpha(3), beta(3), gamma(1), delta(1), epsilon(1). CF(0) has four main subunits: a(1), b(1), b'(1) and c(9-12).

The protein resides in the cellular thylakoid membrane. It catalyses the reaction ATP + H2O + 4 H(+)(in) = ADP + phosphate + 5 H(+)(out). Its function is as follows. Produces ATP from ADP in the presence of a proton gradient across the membrane. The catalytic sites are hosted primarily by the beta subunits. The chain is ATP synthase subunit beta from Nostoc punctiforme (strain ATCC 29133 / PCC 73102).